A 209-amino-acid chain; its full sequence is Outer-membrane lipoprotein LolB (209 aa).

The N-terminal stretch at 1–17 is a signal peptide; the sequence is MKKSTLLFSLMAMALSG. C18 carries the N-palmitoyl cysteine lipid modification. Residue C18 is the site of S-diacylglycerol cysteine attachment.

The protein belongs to the LolB family. In terms of assembly, monomer.

It is found in the cell outer membrane. Functionally, plays a critical role in the incorporation of lipoproteins in the outer membrane after they are released by the LolA protein. In Haemophilus ducreyi (strain 35000HP / ATCC 700724), this protein is Outer-membrane lipoprotein LolB.